The sequence spans 608 residues: Elongation factor 4 (608 aa).

Positions 11–193 (DRIRNFSIIA…QIVQKIPAPS (183 aa)) constitute a tr-type G domain. GTP-binding positions include 23–28 (DHGKST) and 140–143 (NKID).

The protein belongs to the TRAFAC class translation factor GTPase superfamily. Classic translation factor GTPase family. LepA subfamily.

It is found in the cell membrane. The catalysed reaction is GTP + H2O = GDP + phosphate + H(+). Its function is as follows. Required for accurate and efficient protein synthesis under certain stress conditions. May act as a fidelity factor of the translation reaction, by catalyzing a one-codon backward translocation of tRNAs on improperly translocated ribosomes. Back-translocation proceeds from a post-translocation (POST) complex to a pre-translocation (PRE) complex, thus giving elongation factor G a second chance to translocate the tRNAs correctly. Binds to ribosomes in a GTP-dependent manner. This is Elongation factor 4 from Anoxybacillus flavithermus (strain DSM 21510 / WK1).